The chain runs to 431 residues: Trigger factor (431 aa).

The PPIase FKBP-type domain occupies 160-245 (EDRVTIDFSG…LKKVEVMVLP (86 aa)).

The protein belongs to the FKBP-type PPIase family. Tig subfamily.

It is found in the cytoplasm. The catalysed reaction is [protein]-peptidylproline (omega=180) = [protein]-peptidylproline (omega=0). Involved in protein export. Acts as a chaperone by maintaining the newly synthesized protein in an open conformation. Functions as a peptidyl-prolyl cis-trans isomerase. This Actinobacillus succinogenes (strain ATCC 55618 / DSM 22257 / CCUG 43843 / 130Z) protein is Trigger factor.